The primary structure comprises 315 residues: Protein FRA10AC1 homolog (315 aa).

Methionine 1 is modified (N-acetylmethionine). The tract at residues 1–28 (MHGHGGYDSDFSDDEQGGGSSKKRKKTV) is disordered. Phosphoserine is present on residues serine 9 and serine 12. The residue at position 36 (lysine 36) is an N6-acetyllysine. Residues 225-235 (KEIKSTKKRSK) are compositionally biased toward basic residues. The disordered stretch occupies residues 225–308 (KEIKSTKKRS…EKSQEEEFDD (84 aa)). Over residues 236–245 (TKTESDESPH) the composition is skewed to basic and acidic residues. Phosphoserine occurs at positions 251 and 252. Positions 257 to 279 (SQGKDEGHSSSKRSEDSRNRNAG) are enriched in basic and acidic residues. 2 positions are modified to phosphoserine: serine 283 and serine 285.

In terms of assembly, interacts with ESS2.

It localises to the nucleus. May be involved in pre-mRNA splicing. In Rattus norvegicus (Rat), this protein is Protein FRA10AC1 homolog (Fra10ac1).